The sequence spans 788 residues: Auxin response factor 4 (788 aa).

Acidic residues predominate over residues 1-19 (MEFDLNTEIAEVEEEENDD). Residues 1-53 (MEFDLNTEIAEVEEEENDDVGVGVGGGTRIDKGRLGISPSSSSSCSSGSSSSS) are disordered. Over residues 38 to 53 (SPSSSSSCSSGSSSSS) the composition is skewed to low complexity. Positions 177–279 (FCKTLTASDT…ELRLGIRRAA (103 aa)) form a DNA-binding region, TF-B3. Positions 413-433 (LSIQSSPRPKRPWAGLLDTTP) are disordered. The 83-residue stretch at 665-747 (RICTKVHKQG…VVWKIHLYTK (83 aa)) folds into the PB1 domain.

This sequence belongs to the ARF family. In terms of assembly, homodimers and heterodimers. In terms of tissue distribution, expressed in the whole plant.

The protein resides in the nucleus. Functionally, auxin response factors (ARFs) are transcriptional factors that bind specifically to the DNA sequence 5'-TGTCTC-3' found in the auxin-responsive promoter elements (AuxREs). Could act as transcriptional activator or repressor. Formation of heterodimers with Aux/IAA proteins may alter their ability to modulate early auxin response genes expression. The sequence is that of Auxin response factor 4 (ARF4) from Arabidopsis thaliana (Mouse-ear cress).